A 635-amino-acid polypeptide reads, in one-letter code: 1-deoxy-D-xylulose-5-phosphate synthase (635 aa).

Residues His79 and 120-122 contribute to the thiamine diphosphate site; that span reads GHS. Position 151 (Asp151) interacts with Mg(2+). Thiamine diphosphate contacts are provided by residues 152 to 153, Asn182, Tyr291, and Glu372; that span reads GA. Asn182 is a Mg(2+) binding site.

The protein belongs to the transketolase family. DXPS subfamily. As to quaternary structure, homodimer. Mg(2+) serves as cofactor. Requires thiamine diphosphate as cofactor.

The catalysed reaction is D-glyceraldehyde 3-phosphate + pyruvate + H(+) = 1-deoxy-D-xylulose 5-phosphate + CO2. The protein operates within metabolic intermediate biosynthesis; 1-deoxy-D-xylulose 5-phosphate biosynthesis; 1-deoxy-D-xylulose 5-phosphate from D-glyceraldehyde 3-phosphate and pyruvate: step 1/1. Catalyzes the acyloin condensation reaction between C atoms 2 and 3 of pyruvate and glyceraldehyde 3-phosphate to yield 1-deoxy-D-xylulose-5-phosphate (DXP). This Xylella fastidiosa (strain M12) protein is 1-deoxy-D-xylulose-5-phosphate synthase.